The sequence spans 339 residues: Fructose-1,6-bisphosphatase class 1 (339 aa).

Mg(2+)-binding residues include glutamate 94, aspartate 116, leucine 118, and aspartate 119. Residues 119 to 122, asparagine 210, and lysine 276 contribute to the substrate site; that span reads DGSS. A Mg(2+)-binding site is contributed by glutamate 282.

Belongs to the FBPase class 1 family. Homotetramer. Mg(2+) is required as a cofactor.

The protein localises to the cytoplasm. It catalyses the reaction beta-D-fructose 1,6-bisphosphate + H2O = beta-D-fructose 6-phosphate + phosphate. It functions in the pathway carbohydrate biosynthesis; gluconeogenesis. In Burkholderia ambifaria (strain ATCC BAA-244 / DSM 16087 / CCUG 44356 / LMG 19182 / AMMD) (Burkholderia cepacia (strain AMMD)), this protein is Fructose-1,6-bisphosphatase class 1.